We begin with the raw amino-acid sequence, 209 residues long: MAVFKTLTDADIAMFSTSLVAGVDEVGRGPLVGDVVTAAVILDPNRPILGLNDSKKLTEKRREALFDEICEKALSFHVGRASPAEIDELNILHATMLAMQRAVSGLKLTPALVLVDGNRSPAFTHQGLSLASHSIIKGDGLIASISAASIIAKVTRDREMDALDAAYPQYGFAKHKGYPTKAHFEAIAEHGVFDQYRKSFKPVKALLER.

The 192-residue stretch at 18 to 209 folds into the RNase H type-2 domain; it reads SLVAGVDEVG…FKPVKALLER (192 aa). A divalent metal cation contacts are provided by aspartate 24, glutamate 25, and aspartate 116.

Belongs to the RNase HII family. Requires Mn(2+) as cofactor. Mg(2+) is required as a cofactor.

The protein localises to the cytoplasm. The enzyme catalyses Endonucleolytic cleavage to 5'-phosphomonoester.. Functionally, endonuclease that specifically degrades the RNA of RNA-DNA hybrids. This chain is Ribonuclease HII, found in Shewanella oneidensis (strain ATCC 700550 / JCM 31522 / CIP 106686 / LMG 19005 / NCIMB 14063 / MR-1).